A 376-amino-acid chain; its full sequence is Carbohydrate sulfotransferase 14 (376 aa).

The interval 1–30 is disordered; sequence MFPRPLTPLAAPKSAETLGRTPRRAPLGRA. Topologically, residues 1–39 are cytoplasmic; sequence MFPRPLTPLAAPKSAETLGRTPRRAPLGRARAGLGGPPL. Low complexity predominate over residues 18-30; it reads LGRTPRRAPLGRA. The chain crosses the membrane as a helical; Signal-anchor for type II membrane protein span at residues 40–60; the sequence is LLPSMLMFAVIVASSGLLLMI. Residues 61–376 lie on the Lumenal side of the membrane; the sequence is ERGILSEMKP…PNVTKEACHQ (316 aa). The interval 76-96 is disordered; that stretch reads PSHKGAAWSGTDPKPRGLSLD. An N-linked (GlcNAc...) asparagine glycan is attached at Asn-110. 3'-phosphoadenylyl sulfate is bound by residues 155 to 161 and 213 to 221; these read PKVACSN and RDPLERLLS. N-linked (GlcNAc...) asparagine glycosylation occurs at Asn-368.

It belongs to the sulfotransferase 2 family.

It localises to the golgi apparatus membrane. It catalyses the reaction dermatan + n 3'-phosphoadenylyl sulfate = dermatan 4'-sulfate + n adenosine 3',5'-bisphosphate + n H(+). Catalyzes the transfer of sulfate to position 4 of the N-acetylgalactosamine (GalNAc) residue of dermatan sulfate. Plays a pivotal role in the formation of 4-0-sulfated IdoA blocks in dermatan sulfate. Transfers sulfate to the C-4 hydroxyl of beta1,4-linked GalNAc that is substituted with an alpha-linked iduronic acid (IdoUA) at the C-3 hydroxyl. Transfers sulfate more efficiently to GalNAc residues in -IdoUA-GalNAc-IdoUA- than in -GlcUA-GalNAc-GlcUA-sequences. Has preference for partially desulfated dermatan sulfate. Addition of sulfate to GalNAc may occur immediately after epimerization of GlcUA to IdoUA. Appears to have an important role in the formation of the cerebellar neural network during postnatal brain development. The polypeptide is Carbohydrate sulfotransferase 14 (Chst14) (Mus musculus (Mouse)).